Consider the following 479-residue polypeptide: FK506-binding protein 4 (479 aa).

Disordered regions lie at residues 39-106 (IDPD…ARKL), 141-162 (VKGK…EGLD), and 205-367 (GNYV…KTTG). Composition is skewed to acidic residues over residues 40 to 49 (DPDEAPEFDD), 68 to 93 (LDEE…DEEV), 148 to 162 (TDDD…EGLD), and 214 to 256 (PRDD…DLDG). Composition is skewed to basic and acidic residues over residues 272 to 299 (APKL…DKAK), 325 to 334 (AKPEQKETKK), and 348 to 364 (SKER…KAEK). One can recognise a PPIase FKBP-type domain in the interval 393 to 479 (GNTVAMRYIG…IFDVKLLEIK (87 aa)).

The protein belongs to the FKBP-type PPIase family. FKBP3/4 subfamily. As to quaternary structure, binds to histones H3 and H4.

It localises to the nucleus. It carries out the reaction [protein]-peptidylproline (omega=180) = [protein]-peptidylproline (omega=0). With respect to regulation, inhibited by both FK506 and rapamycin. Functionally, PPIase that acts as a histone chaperone. Histone proline isomerase that increases the rate of cis-trans isomerization at prolines on the histone H3 N-terminal tail. Proline isomerization influences H3 methylation thereby regulating gene expression. This is FK506-binding protein 4 (fpr4) from Emericella nidulans (strain FGSC A4 / ATCC 38163 / CBS 112.46 / NRRL 194 / M139) (Aspergillus nidulans).